Consider the following 2417-residue polypeptide: MASASGGDVPAGREKDSKYRAYAKAIDQALKTFETPNEWADLISALGKLAKVFQSNAKFCAIPNRVTVAKRLSQCLHPALPMGVHLKALETYRQIFEILGPNKLPECLYLFAVGLFPLMDHCGIKVKSELFTIFENYLVPLGANLRPALPGFLGGVLLALEEGTEFYERSFILLDRVCEKVGPRAFYACLWQAILGSPPVRLPAMIYVNAKFDKLKSLDDQIHLVGDHVNHMVAALCAVADDTGSPLVQRYLLDFLVAAFPLDSTNLTNEDFVQLLRRCLFVVLRRDMSLNRRLYTWLINRSGETKGVSGLSLGGPDDGIELTFFKERVLGLVHGALGEYLALDTIETPFANHQNSMWGDRKEAEQVQFAEVRVCRLLLYLQDRADIGRTILETVFADFLKKSAEFHSSSNSSSLKKSPRKIQQSLKNPRKPGDREGLYLDLNSVCSTSNKDDDVTSVTSSAAANASSAPPPDEEDLVQARRIDELSKTFNMLLNSLEPGFLWTFLGDWYRRIVENNEFERQIHDFSQVVSVCLEMCNVESDPTIRTQHLPRLLETVLEGVSNKNLLSSCDQSDLLQLYTVCQKLLEISTAHPPSPIEVDEIAEDSLSMSQEVTAIEHERSQTDACLSQCLSALSAIFEIYTTRREASLIPLIDASTTLLNAFLEVPIYYLGFGIVDNPGDYCRESSEEVQPWLKNMLKVIDGPGWLREMRAGLCADVSARASLLELLCKIYVKSVQVLEQHEEAAHRPHDDFYDEMTHVLLKPLLAKRDCQFIEQGKVFGTCGEAVWLGIGSRKFCTEQQRLARLLVELHSRRPLEASSDVESIVVQSLTSTDDLVCSEAARTFHRIWVLARNLEDREQQGIPYQKPFNRAVMILLGVLADESVAKTRTELKAAAAEWFHDCSKHQDLPRIVQMLSTMLMNPVTARISIQYIRQETKMTTDTCPVIPADISAVTLVTIDGKQRLYHVTGQPAIDSSSTESTWITEVRNRLLRTSTGEDSGDPSAAGAAGILRSSSPDPDVVPAFDDDTDSLDTLSMSDSIDETVIHVLREIVDQVCEEFNEEDLERERIMTMFAMDNVEPTGASFNLPHDSEADDEVAERPAPICPDSLVQRVKKGHRRQDSLQESIFNMTDKDLSAFDTSEIFRPSTESVSRGTGAGAAAAAAAAGASSKDTILPGTVSSASSTSSAAGGTSSLFEEMHTHMLLYGESGKVVDLARAETAFRILTALLAPRGATGNRMLLNCLVSSGTTTTSDSSAEHSLVELMNRHVRAILGQHFWSAPASDEEKHKHITLLELLITISLHFLRSYFLNSPISPVTEADLTSLWKCKISALEFLCELFRELSAMLNEHESKQFVQFVQTILNRSKLQKCILHLLLTAVDHNPMESSSSKKTGGGGGPLSVSISKFNEGLLGESRRLSPLLAAYHRSLLTFTSHAIRLECDIKRGFATFSDANSSHRFSIIQSVMNQSFNNRTSRVDNHASTVELRAFLLILLNALKKQPHRHEMWLQFVVQILPWVERSLATIVCRVVEQLCKNMENAMSVAYENPPTSDVVVDSPGDVRDEPDCYPANYLAMTMELLTTLVHFCVIDSVPTSAVAGGAPGVGGAGGVTSSSGGVQQVIHENATPTPSSTSMVGHAMSVIPGSKVATELFSQLGKVFSMSGDSGGVISKLDSSRQHGNGWRQAQSDMLSSLPHSLATICNVWTVVRRAQPPIVPIGTNSQLRRLVLHLLSPIAQYHKHAFLTSLALVWLTRSTAKPTVTLRKQDPDRATFEYSSAQLDITNLLLSLQVIPFEDLISSVNSTLREASFKANKVGITTIDKANFPTEEPLLELVHSCVSAVLQTQLRLCWSSLLSLFSEAPLSALSARAVFLLFVILSDFVKCVGGAYIVEDKAMYRNVQEVCSRLAEAVNAIVGWQLETTTWLKRTLVVKQDHGSSISSSIRSVDQSPIIEIQSSMSNVSGGGGSLDNPSGSTRNSTLSLINKPGGSIGTGSSVTSTLVDSKSENMKIEKKSSSNLRASIKDTNNNRRDPAHSTQALFLLAERLTDLLDSVSKSDEKDKVLPTLQAVWANVVPYLKAKNARNARFFLASSQLLASMSSYSYMRPVWKKTTLDLLLDSGFFKMDHSALKQWLVVTDHLMTHDRTSFKDLLKSISYSPNTSFSIMTSKEQEYEARAQALKRLTFVVFGSQLDQYHGQMNDIQERLSDNLRVSQSPVIRSAVFLCIRVLLLRLRPHSLIGVWPIMVTELVHALSQLEQQLQSGEQDSGATAASSDQWMQLYVAACKLLETLCTLPAGYLSHFQMFHWAFVSSVSADKTEIFKPFAERINDLLAKKYGELLTPETMSNHTASLGAVKILTSFEELRPFFYTLANLNKSVPESNNTLRDAHALSGSLTYKNAVARLESALYVDFSEHLQF.

4 disordered regions span residues 409–437 (SSNS…DREG), 449–475 (SNKD…PDEE), 994–1029 (TSTG…DDDT), and 1957–2032 (SMSN…RRDP). 2 stretches are compositionally biased toward low complexity: residues 456-468 (TSVT…NASS) and 1002-1024 (DPSA…VVPA). The span at 1969–1982 (DNPSGSTRNSTLSL) shows a compositional bias: polar residues. Residues 2003–2014 (SKSENMKIEKKS) are compositionally biased toward basic and acidic residues. Over residues 2015 to 2025 (SSNLRASIKDT) the composition is skewed to polar residues.

It belongs to the DOP1 family.

May be involved in protein traffic between late Golgi and early endosomes. Essential for cell patterning during gastrulation. In Caenorhabditis elegans, this protein is Protein pad-1 (pad-1).